A 404-amino-acid chain; its full sequence is 2,3-bisphosphoglycerate-independent phosphoglycerate mutase (404 aa).

Residues 155–183 (LSDMIGDSDPHREGLPPEKIRPTDPSGDR) are disordered. A compositionally biased stretch (basic and acidic residues) spans 162–183 (SDPHREGLPPEKIRPTDPSGDR).

The protein belongs to the BPG-independent phosphoglycerate mutase family. A-PGAM subfamily.

The catalysed reaction is (2R)-2-phosphoglycerate = (2R)-3-phosphoglycerate. It functions in the pathway carbohydrate degradation; glycolysis; pyruvate from D-glyceraldehyde 3-phosphate: step 3/5. Functionally, catalyzes the interconversion of 2-phosphoglycerate and 3-phosphoglycerate. This Thermoplasma acidophilum (strain ATCC 25905 / DSM 1728 / JCM 9062 / NBRC 15155 / AMRC-C165) protein is 2,3-bisphosphoglycerate-independent phosphoglycerate mutase.